Here is a 935-residue protein sequence, read N- to C-terminus: ABC transporter A family member 7 (935 aa).

Transmembrane regions (helical) follow at residues 34–54 (LIMI…LFDT), 338–358 (IASL…FPVI), 392–412 (FLTI…AIGL), 424–444 (FVFY…VSSV), 454–474 (ASYI…NFLI), 483–503 (WIIV…YELA), and 528–548 (DDVF…AYYI). Positions 571 to 591 (SLRRPSLQRQGSKVSVDMEKP) are disordered. The ABC transporter domain maps to 613–850 (IVCDNLKKVY…YGGSYVFTMT (238 aa)). 651–658 (GPNGAGKT) is a binding site for ATP.

The protein belongs to the ABC transporter superfamily. ABCA family. CPR flippase (TC 3.A.1.211) subfamily.

It localises to the membrane. The protein is ABC transporter A family member 7 (ABCA7) of Arabidopsis thaliana (Mouse-ear cress).